Here is a 280-residue protein sequence, read N- to C-terminus: Phosphatidylglycerol--prolipoprotein diacylglyceryl transferase (280 aa).

A run of 3 helical transmembrane segments spans residues 19 to 39, 56 to 76, and 90 to 110; these read LSVRWYGIIIAVGILLGYFVA, IIFYSALFGFIAARIYFVIFQ, and IWHGGIAIHGGLIGGFIAGVI. Arg-138 contacts a 1,2-diacyl-sn-glycero-3-phospho-(1'-sn-glycerol). 2 helical membrane-spanning segments follow: residues 204 to 224 and 236 to 256; these read LGETFFLYLTWYSIGRFFIEG and IRVAQLVSILLILISISLIVY.

The protein belongs to the Lgt family.

It localises to the cell membrane. The catalysed reaction is L-cysteinyl-[prolipoprotein] + a 1,2-diacyl-sn-glycero-3-phospho-(1'-sn-glycerol) = an S-1,2-diacyl-sn-glyceryl-L-cysteinyl-[prolipoprotein] + sn-glycerol 1-phosphate + H(+). Its pathway is protein modification; lipoprotein biosynthesis (diacylglyceryl transfer). Catalyzes the transfer of the diacylglyceryl group from phosphatidylglycerol to the sulfhydryl group of the N-terminal cysteine of a prolipoprotein, the first step in the formation of mature lipoproteins. The protein is Phosphatidylglycerol--prolipoprotein diacylglyceryl transferase of Staphylococcus aureus (strain MRSA252).